The sequence spans 364 residues: Alanine racemase (364 aa).

K34 acts as the Proton acceptor; specific for D-alanine in catalysis. K34 carries the N6-(pyridoxal phosphate)lysine modification. Position 129 (R129) interacts with substrate. Y259 functions as the Proton acceptor; specific for L-alanine in the catalytic mechanism. M307 contributes to the substrate binding site.

Belongs to the alanine racemase family. Pyridoxal 5'-phosphate is required as a cofactor.

It carries out the reaction L-alanine = D-alanine. Its pathway is amino-acid biosynthesis; D-alanine biosynthesis; D-alanine from L-alanine: step 1/1. Functionally, catalyzes the interconversion of L-alanine and D-alanine. May also act on other amino acids. In Coxiella burnetii (strain RSA 331 / Henzerling II), this protein is Alanine racemase (alr).